A 306-amino-acid chain; its full sequence is Porphobilinogen deaminase (306 aa).

Residue cysteine 239 is modified to S-(dipyrrolylmethanemethyl)cysteine.

This sequence belongs to the HMBS family. In terms of assembly, monomer. The cofactor is dipyrromethane.

It catalyses the reaction 4 porphobilinogen + H2O = hydroxymethylbilane + 4 NH4(+). It participates in porphyrin-containing compound metabolism; protoporphyrin-IX biosynthesis; coproporphyrinogen-III from 5-aminolevulinate: step 2/4. Tetrapolymerization of the monopyrrole PBG into the hydroxymethylbilane pre-uroporphyrinogen in several discrete steps. In Helicobacter pylori (strain HPAG1), this protein is Porphobilinogen deaminase.